Reading from the N-terminus, the 277-residue chain is NAD kinase (277 aa).

Asp67 (proton acceptor) is an active-site residue. Residues 67–68, Arg72, 137–138, Lys148, Arg165, Asp167, 178–183, Leu202, and Gln236 contribute to the NAD(+) site; these read DG, NE, and TGYAMS.

It belongs to the NAD kinase family. A divalent metal cation is required as a cofactor.

It localises to the cytoplasm. It carries out the reaction NAD(+) + ATP = ADP + NADP(+) + H(+). Involved in the regulation of the intracellular balance of NAD and NADP, and is a key enzyme in the biosynthesis of NADP. Catalyzes specifically the phosphorylation on 2'-hydroxyl of the adenosine moiety of NAD to yield NADP. This is NAD kinase from Pyrococcus abyssi (strain GE5 / Orsay).